A 405-amino-acid polypeptide reads, in one-letter code: Transposase from transposon Tn1545 (405 aa).

One can recognise a Core-binding (CB) domain in the interval glycine 79 to isoleucine 163. The Tyr recombinase domain maps to valine 186–lysine 392. Residues arginine 225, lysine 264, histidine 343, arginine 346, and histidine 369 contribute to the active site. Tyrosine 379 (O-(3'-phospho-DNA)-tyrosine intermediate) is an active-site residue.

The protein belongs to the 'phage' integrase family.

This Streptococcus agalactiae serotype V (strain ATCC BAA-611 / 2603 V/R) protein is Transposase from transposon Tn1545 (int).